The sequence spans 202 residues: ATP-dependent Clp protease proteolytic subunit 3 (202 aa).

The active-site Nucleophile is the serine 93. Histidine 118 is an active-site residue.

This sequence belongs to the peptidase S14 family. In terms of assembly, fourteen ClpP subunits assemble into 2 heptameric rings which stack back to back to give a disk-like structure with a central cavity, resembling the structure of eukaryotic proteasomes.

The protein localises to the cytoplasm. It catalyses the reaction Hydrolysis of proteins to small peptides in the presence of ATP and magnesium. alpha-casein is the usual test substrate. In the absence of ATP, only oligopeptides shorter than five residues are hydrolyzed (such as succinyl-Leu-Tyr-|-NHMec, and Leu-Tyr-Leu-|-Tyr-Trp, in which cleavage of the -Tyr-|-Leu- and -Tyr-|-Trp bonds also occurs).. In terms of biological role, cleaves peptides in various proteins in a process that requires ATP hydrolysis. Has a chymotrypsin-like activity. Plays a major role in the degradation of misfolded proteins. This is ATP-dependent Clp protease proteolytic subunit 3 from Rhodococcus jostii (strain RHA1).